A 116-amino-acid chain; its full sequence is Guanylin (116 aa).

The signal sequence occupies residues 1–23 (MNACVLSVLCLLGALAVLVEGVT). The propeptide occupies 24 to 101 (VQDGDLSFPL…LQRLEAIAQD (78 aa)). 3 disulfides stabilise this stretch: Cys69/Cys83, Cys105/Cys113, and Cys108/Cys116.

It belongs to the guanylin family. As to expression, localized in both crypts and villi in the small intestine and to superficial epithelial cells in the colon.

It localises to the secreted. Its function is as follows. Endogenous activator of intestinal guanylate cyclase. It stimulates this enzyme through the same receptor binding region as the heat-stable enterotoxins. The polypeptide is Guanylin (Guca2a) (Mus musculus (Mouse)).